The primary structure comprises 76 residues: Small ribosomal subunit protein bS18 (76 aa).

The protein belongs to the bacterial ribosomal protein bS18 family. As to quaternary structure, part of the 30S ribosomal subunit. Forms a tight heterodimer with protein bS6.

Binds as a heterodimer with protein bS6 to the central domain of the 16S rRNA, where it helps stabilize the platform of the 30S subunit. The protein is Small ribosomal subunit protein bS18 of Alkaliphilus metalliredigens (strain QYMF).